A 406-amino-acid chain; its full sequence is NADH-ubiquinone oxidoreductase 49 kDa subunit (406 aa).

This sequence belongs to the complex I 49 kDa subunit family. As to quaternary structure, complex I is composed of 45 different subunits. Component of the iron-sulfur (IP) fragment of the enzyme.

The protein localises to the mitochondrion inner membrane. The catalysed reaction is a ubiquinone + NADH + 5 H(+)(in) = a ubiquinol + NAD(+) + 4 H(+)(out). Functionally, core subunit of the mitochondrial membrane respiratory chain NADH dehydrogenase (Complex I) that is believed to belong to the minimal assembly required for catalysis. Complex I functions in the transfer of electrons from NADH to the respiratory chain. The immediate electron acceptor for the enzyme is believed to be ubiquinone. This is NADH-ubiquinone oxidoreductase 49 kDa subunit (nad7) from Dictyostelium citrinum (Slime mold).